We begin with the raw amino-acid sequence, 415 residues long: Pectin acetylesterase 12 (415 aa).

Residues 1–20 form the signal peptide; sequence MVKLLLVGFVVAGIILGTQA. A glycan (N-linked (GlcNAc...) asparagine) is linked at Asn-27. Residues Ser-197, Asp-293, and His-360 each act as charge relay system in the active site.

It belongs to the pectinacetylesterase family.

It localises to the secreted. Its subcellular location is the cell wall. In terms of biological role, hydrolyzes acetyl esters in homogalacturonan regions of pectin. In type I primary cell wall, galacturonic acid residues of pectin can be acetylated at the O-2 and O-3 positions. Decreasing the degree of acetylation of pectin gels in vitro alters their physical properties. The chain is Pectin acetylesterase 12 from Arabidopsis thaliana (Mouse-ear cress).